Reading from the N-terminus, the 125-residue chain is MSDIRFTDQHEWVRVDGDIATIGITDYAQEQLGDVVFVELPEVGKDIAAGDEAAVVESVKAASEVYSPVSGEVIDVNSDIEKTPAGVNENAMGDGWFIKLRLADPSELDKLMDEAAYSEFVESLQ.

In terms of domain architecture, Lipoyl-binding spans 19–101; the sequence is IATIGITDYA…MGDGWFIKLR (83 aa). The residue at position 60 (Lys-60) is an N6-lipoyllysine.

This sequence belongs to the GcvH family. The glycine cleavage system is composed of four proteins: P, T, L and H. (R)-lipoate is required as a cofactor.

In terms of biological role, the glycine cleavage system catalyzes the degradation of glycine. The H protein shuttles the methylamine group of glycine from the P protein to the T protein. The sequence is that of Glycine cleavage system H protein from Parvibaculum lavamentivorans (strain DS-1 / DSM 13023 / NCIMB 13966).